We begin with the raw amino-acid sequence, 3033 residues long: Genome polyprotein (3033 aa).

An N-acetylserine; by host modification is found at S2. An interaction with STAT1 region spans residues 2–23 (STNPKPQRKTKRNTNRRPEDVK). The interaction with EIF2AK2/PKR stretch occupies residues 2–58 (STNPKPQRKTKRNTNRRPEDVKFPGGGQIVGGVYLLPRRGPRLGVRTTRKTSERSQP). The segment at 2-59 (STNPKPQRKTKRNTNRRPEDVKFPGGGQIVGGVYLLPRRGPRLGVRTTRKTSERSQPR) is interaction with DDX3X. The disordered stretch occupies residues 2–75 (STNPKPQRKT…PKDRRSTGKA (74 aa)). Residues 2–168 (STNPKPQRKT…EDGVNYATGN (167 aa)) lie on the Cytoplasmic side of the membrane. Short sequence motifs (nuclear localization signal) lie at residues 5 to 13 (PKPQRKTKR) and 38 to 43 (PRRGPR). Residues 7–16 (PQRKTKRNTN) are compositionally biased toward basic residues. Positions 32–47 (GGVYLLPRRGPRLGVR) are enriched in low complexity. A Phosphoserine; by host modification is found at S53. 2 consecutive short sequence motifs (nuclear localization signal) follow at residues 58-64 (PRGRRQP) and 66-71 (PKDRRS). Phosphoserine; by host is present on S99. Residues 112–152 (PRHRSRNVGKVIDTLTCGFADLMGYIPVVGAPLSGAARAVA) are important for endoplasmic reticulum and mitochondrial localization. Phosphoserine; by host PKA is present on S116. Positions 122–173 (VIDTLTCGFADLMGYIPVVGAPLSGAARAVAHGVRVLEDGVNYATGNLPGFP) are interaction with APOA2. The interval 164-167 (YATG) is important for lipid droplets localization. A helical membrane pass occupies residues 169–189 (LPGFPFSIFLLALLSCITVPV). Positions 178–191 (LLALLSCITVPVSA) are cleaved as a propeptide — ER anchor for the core protein, removed in mature form by host signal peptidase. At 190–358 (SAAQVKNTSS…SGAHWGVMFG (169 aa)) the chain is on the lumenal side. N-linked (GlcNAc...) asparagine; by host glycans are attached at residues N196, N209, and N234. Positions 265–296 (VVMSATFCSALYVGDLCGGVMLAAQVFIVSPQ) are important for fusion. An N-linked (GlcNAc...) asparagine; by host glycan is attached at N305. A helical membrane pass occupies residues 359–379 (LAYFSMQGAWAKVIVILLLAA). Residues 380–729 (GVDAGTTTVG…WEWVVLLFLL (350 aa)) are Lumenal-facing. The tract at residues 385-411 (TTTVGGAVARSTNVIAGVFSHGPQQNI) is HVR1. N417, N423, N430, and N448 each carry an N-linked (GlcNAc...) (high mannose) asparagine; by host glycan. 4 disulfide bridges follow: C429–C554, C452–C459, C488–C496, and C505–C510. An N-linked (GlcNAc...) (high mannose) asparagine; by host glycan is attached at N477. A CD81-binding 1 region spans residues 484-496 (MRPYCWHYPPKPC). The CD81-binding 2 stretch occupies residues 524 to 555 (RGVPTYTWGENETDVFLLNSTRPPQGSWFGCT). N-linked (GlcNAc...) (high mannose) asparagine; by host glycans are attached at residues N534, N542, and N558. C566 and C571 are oxidised to a cystine. N-linked (GlcNAc...) (high mannose) asparagine; by host glycosylation is present at N578. 3 cysteine pairs are disulfide-bonded: C585-C589, C601-C624, and C611-C648. Residues N627 and N649 are each glycosylated (N-linked (GlcNAc...) (high mannose) asparagine; by host). A disulfide bridge connects residues C656 and C681. Positions 664–675 (SQLSPLLHSTTE) are EIF2AK2/eIF2-alpha phosphorylation homology domain (PePHD). The chain crosses the membrane as a helical span at residues 730–750 (LADARVCACLWMLILLGQAEA). Over 751–761 (ALEKLVVLHAA) the chain is Lumenal. Residues 762 to 782 (SAANCHGLLYFAIFFVAAWHI) traverse the membrane as a helical segment. The Cytoplasmic portion of the chain corresponds to 783–785 (RGR). The chain crosses the membrane as a helical span at residues 786-807 (VVPLTTYCLTGLWPFCLLLMAL). Topologically, residues 808–817 (PRQAYAYDAP) are lumenal. Residues 818–838 (VHGQIGVGLLILITLFTLTPG) traverse the membrane as a helical segment. The Cytoplasmic portion of the chain corresponds to 839–842 (YKTL). A helical membrane pass occupies residues 843–863 (LGQCLWWLCYLLTLGEAMIQE). At 864 to 885 (WVPPMQVRGGRDGIAWAVTIFC) the chain is on the lumenal side. The chain crosses the membrane as a helical span at residues 886-906 (PGVVFDITKWLLALLGPAYLL). Residues 907 to 1030 (RAALTHVPYF…GYTSKGWKLL (124 aa)) enclose the Peptidase C18 domain. The Cytoplasmic portion of the chain corresponds to 907-1661 (RAALTHVPYF…CMQADLEVMT (755 aa)). The tract at residues 908–1210 (AALTHVPYFV…PVETLDVVTR (303 aa)) is protease NS2-3. C926 is lipidated: S-palmitoyl cysteine; by host. The interaction with human SCPS1 stretch occupies residues 933-953 (AGGRYVQVALLALGRWTGTYI). Catalysis depends on for protease NS2 activity; shared with dimeric partner residues H956, E976, and C997. Residues 1031-1212 (APITAYAQQT…ETLDVVTRSP (182 aa)) enclose the Peptidase S29 domain. Catalysis depends on charge relay system; for serine protease NS3 activity residues H1087 and D1111. The Zn(2+) site is built by C1127 and C1129. S1169 (charge relay system; for serine protease NS3 activity) is an active-site residue. Zn(2+) is bound by residues C1175 and H1179. The Helicase ATP-binding domain occupies 1221 to 1373 (PAVPQTYQVG…PDIEEVGLGR (153 aa)). 1234–1241 (APTGSGKS) contributes to the ATP binding site. Mg(2+)-binding residues include S1241 and E1321. Residues 1320 to 1323 (DECH) carry the DECH box motif. Residues 1481 to 1501 (VPQDAVSRSQRRGRTGRGRQG) are disordered. The tract at residues 1490–1501 (QRRGRTGRGRQG) is RNA-binding. A helical transmembrane segment spans residues 1662-1682 (STWVLAGGVLAAVAAYCLATG). An NS3-binding region spans residues 1683 to 1694 (CVSIIGRLHVNQ). At 1683–1809 (CVSIIGRLHV…ALTSPLSTST (127 aa)) the chain is on the cytoplasmic side. Residues 1810–1830 (TILLNIMGGWLASQIAPPAGA) traverse the membrane as a helical segment. Residues 1831-1832 (TG) lie on the Lumenal side of the membrane. The chain crosses the membrane as a helical span at residues 1833 to 1853 (FVVSGLVGAAVGSIGLGKVLV). The interval 1837–1865 (GLVGAAVGSIGLGKVLVDILAGYGAGISG) is glycine zipper. D1854 is a topological domain (cytoplasmic). A helical membrane pass occupies residues 1855–1875 (ILAGYGAGISGALVAFKIMSG). Topologically, residues 1876–1885 (EKPSMEDVIN) are lumenal. A helical transmembrane segment spans residues 1886–1906 (LLPGILSPGALVVGVICAAIL). Over 1907–1976 (RRHVGPGEGA…WITEDCPIPC (70 aa)) the chain is Cytoplasmic. C1972 carries the S-palmitoyl cysteine; by host lipid modification. The S-palmitoyl cysteine; by host; partial moiety is linked to residue C1976. The stretch at 1977 to 2007 (SGSWLRDVWDWVCTILTDFKNWLTSKLFPKL) is an intramembrane region. A membrane-binding region spans residues 1982–2002 (RDVWDWVCTILTDFKNWLTSK). The Cytoplasmic portion of the chain corresponds to 2008-3012 (PGLPFISCQK…FHSVSRARPR (1005 aa)). The D1; RNA-binding stretch occupies residues 2009-2225 (GLPFISCQKG…RATCTTHSNT (217 aa)). Zn(2+)-binding residues include C2015, C2033, C2035, and C2056. Residue Y2069 is modified to Phosphotyrosine; by host. Positions 2124-2212 (EFFSWVDGVQ…ASSSVSQLSA (89 aa)) are FKBP8-binding. The tract at residues 2124–2332 (EFFSWVDGVQ…PTPPPRRRRT (209 aa)) is transcriptional activation. The interval 2139 to 2143 (PTPKP) is interaction with non-structural protein 4A. The tract at residues 2192–2213 (RRLARGSPPSEASSSVSQLSAP) is disordered. The span at 2196 to 2213 (RGSPPSEASSSVSQLSAP) shows a compositional bias: low complexity. S2198 carries the phosphoserine; by host; in p56 modification. A Phosphoserine; by host; in p58 modification is found at S2201. Phosphoserine; by host; in p56 and p58, regulates intracellular NS5A distribution is present on S2205. S2208, S2211, and S2214 each carry phosphoserine; by host; in p58. The tract at residues 2210–2249 (LSAPSLRATCTTHSNTYDVDMVDANLLMEGGVAQTEPESR) is ISDR. The interaction with EIF2AK2/PKR stretch occupies residues 2214 to 2275 (SLRATCTTHS…LEPSIPSECM (62 aa)). Residues 2227–2315 (DVDMVDANLL…YQPPTVAGCA (89 aa)) form a D2 region. The segment at 2228 to 2315 (VDMVDANLLM…YQPPTVAGCA (88 aa)) is disordered. Positions 2249–2306 (RVPVLDFLEPMAEEESDLEPSIPSECMLPRSGFPRALPAWARPDYNPPLVESWRRPDY) are NS4B-binding. The interval 2281 to 2297 (FPRALPAWARPDYNPPL) is interaction with human PPIA/CYPA. Residues 2316-2326 (LPPPKKAPTPP) show a composition bias toward pro residues. The short motif at 2322–2325 (APTP) is the SH3-binding element. The residue at position 2324 (T2324) is a Phosphothreonine; by host. The short motif at 2326 to 2334 (PPRRRRTVG) is the Nuclear localization signal element. Residues 2329–2442 (RRRTVGLSES…SEEDDTTVCC (114 aa)) form a D3 region. The tract at residues 2336 to 2447 (SESTISEALQ…TTVCCSMSYS (112 aa)) is interaction with host IFI27. A Glycyl lysine isopeptide (Lys-Gly) (interchain with G-Cter in ubiquitin) cross-link involves residue K2350. Residues 2352–2432 (FGQPPSSGDA…GSGSGSWSTC (81 aa)) form a disordered region. Positions 2355–2379 (PPSSGDAGSSTGAGAAESGGPTSPG) are enriched in low complexity. Residues 2358–2381 (SGDAGSSTGAGAAESGGPTSPGEP) form a V3 region. The tract at residues 2371–2439 (ESGGPTSPGE…STCSEEDDTT (69 aa)) is interaction with host VAPB. Residues 2398-2408 (EPGDPDLESDQ) show a composition bias toward acidic residues. The span at 2417-2426 (GGGVAPGSGS) shows a compositional bias: gly residues. Positions 2656 to 2774 (PMGFSYDTRC…ISESQGTEED (119 aa)) constitute a RdRp catalytic domain. Residues D2662, D2760, and D2761 each contribute to the Mg(2+) site. Residues 3013 to 3033 (SLLFGLLLLFVGVGLFLLPAR) traverse the membrane as a helical segment.

It belongs to the hepacivirus polyprotein family. In terms of assembly, homooligomer. Interacts with E1 (via C-terminus). Interacts with the non-structural protein 5A. Interacts (via N-terminus) with host STAT1 (via SH2 domain); this interaction results in decreased STAT1 phosphorylation and ubiquitin-mediated proteasome-dependent STAT1 degradation, leading to decreased IFN-stimulated gene transcription. Interacts with host STAT3; this interaction constitutively activates STAT3. Interacts with host LTBR receptor. Interacts with host TNFRSF1A receptor and possibly induces apoptosis. Interacts with host HNRPK. Interacts with host YWHAE. Interacts with host UBE3A/E6AP. Interacts with host DDX3X. Interacts with host APOA2. Interacts with host RXRA protein. Interacts with host SP110 isoform 3/Sp110b; this interaction sequesters the transcriptional corepressor SP110 away from the nucleus. Interacts with host CREB3 nuclear transcription protein; this interaction triggers cell transformation. Interacts with host ACY3. Interacts with host C1QR1. Interacts with host RBM24; this interaction, which enhances the interaction of the mature core protein with 5'-UTR, may inhibit viral translation and favor replication. Interacts (via N-terminus) with host EIF2AK2/PKR (via N-terminus); this interaction induces the autophosphorylation of EIF2AK2. Part of the viral assembly initiation complex composed of NS2, E1, E2, NS3, NS4A, NS5A and the mature core protein. Forms a heterodimer with envelope glycoprotein E2. Interacts with mature core protein. Interacts with protease NS2. The heterodimer E1/E2 interacts with host CLDN1; this interaction plays a role in viral entry into host cell. Interacts with host SPSB2 (via C-terminus). Part of the viral assembly initiation complex composed of NS2, E1, E2, NS3, NS4A, NS5A and the mature core protein. As to quaternary structure, forms a heterodimer with envelope glycoprotein E1. Interacts with host CD81 and SCARB1 receptors; these interactions play a role in viral entry into host cell. Interacts with host EIF2AK2/PKR; this interaction inhibits EIF2AK2 and probably allows the virus to evade the innate immune response. Interacts with host CD209/DC-SIGN and CLEC4M/DC-SIGNR. Interact with host SPCS1; this interaction is essential for viral particle assembly. Interacts with protease NS2. The heterodimer E1/E2 interacts with host CLDN1; this interaction plays a role in viral entry into host cell. Part of the viral assembly initiation complex composed of NS2, E1, E2, NS3, NS4A, NS5A and the mature core protein. Interacts with host SLC3A2/4F2hc; the interaction may facilitate viral entry into host cell. In terms of assembly, homohexamer. Homoheptamer. Interacts with protease NS2. Homodimer. Interacts with host SPCS1; this interaction is essential for viral particle assembly. Interacts with envelope glycoprotein E1. Interacts with envelope glycoprotein E2. Interacts with viroporin p7. Interacts with serine protease/helicase NS3. Part of the replication complex composed of NS2, NS3, NS4A, NS4B, NS5A and the RNA-directed RNA polymerase embedded in an ER-derived membranous web. Part of the viral assembly initiation complex composed of NS2, E1, E2, NS3, NS4A, NS5A and the mature core protein. Interacts with host NEURL3; this interaction prevents E1 binding to glycoprotein E2. As to quaternary structure, interacts with protease NS2. Interacts with non-structural protein 4A; this interaction stabilizes the folding of NS3 serine protease. NS3-NS4A interaction is essential for NS3 activation and allows membrane anchorage of the latter. NS3/NS4A complex also prevents phosphorylation of host IRF3, thus preventing the establishment of dsRNA induced antiviral state. Interacts with host MAVS; this interaction leads to the cleavage and inhibition of host MAVS. Interacts with host TICAM1; this interaction leads to the cleavage and inhibition of host TICAM1. Interacts with host TANK-binding kinase/TBK1; this interaction results in the inhibition of the association between TBK1 and IRF3, which leads to the inhibition of IRF3 activation. Interacts with host RBM24. Part of the replication complex composed of NS2, NS3, NS4A, NS4B, NS5A and the RNA-directed RNA polymerase embedded in an ER-derived membranous web. Part of the viral assembly initiation complex composed of NS2, E1, E2, NS3, NS4A, NS5A and the mature core protein. In terms of assembly, interacts with NS3 serine protease; this interaction stabilizes the folding of NS3 serine protease. NS3-NS4A interaction is essential for NS3 activation and allows membrane anchorage of the latter. Interacts with non-structural protein 5A (via N-terminus). Part of the replication complex composed of NS2, NS3, NS4A, NS4B, NS5A and the RNA-directed RNA polymerase embedded in an ER-derived membranous web. Part of the viral assembly initiation complex composed of NS2, E1, E2, NS3, NS4A, NS5A and the mature core protein. Homomultimer. Interacts with non-structural protein NS5A. Interacts with host PLA2G4C; this interaction likely initiates the recruitment of replication complexes to lipid droplets. Interacts with host STING; this interaction disrupts the interaction between STING and TBK1 thereby suppressing the interferon signaling. Part of the replication complex composed of NS2, NS3, NS4A, NS4B, NS5A and the RNA-directed RNA polymerase embedded in an ER-derived membranous web. As to quaternary structure, monomer. Homodimer; dimerization is required for RNA-binding. Interacts with the mature core protein. Interacts (via N-terminus) with non-structural protein 4A. Interacts with non-structural protein 4B. Interacts (via region D2) with RNA-directed RNA polymerase. Part of the viral assembly initiation complex composed of NS2, E1, E2, NS3, NS4A, NS5A and the mature core protein. Part of the replication complex composed of NS2, NS3, NS4A, NS4B, NS5A and the RNA-directed RNA polymerase embedded in an ER-derived membranous web. Interacts with host GRB2. Interacts with host BIN1. Interacts with host PIK3R1. Interacts with host SRCAP. Interacts with host FKBP8. Interacts (via C-terminus) with host VAPB (via MSP domain). Interacts with host EIF2AK2/PKR; this interaction leads to disruption of EIF2AK2 dimerization by NS5A and probably allows the virus to evade the innate immune response. Interacts (via N-terminus) with host PACSIN2 (via N-terminus); this interaction attenuates protein kinase C alpha-mediated phosphorylation of PACSIN2 by disrupting the interaction between PACSIN2 and PRKCA. Interacts (via N-terminus) with host SRC kinase (via SH2 domain). Interacts with most Src-family kinases. Interacts with host IFI27 and SKP2; promotes the ubiquitin-mediated proteasomal degradation of NS5A. Interacts with host GPS2. Interacts with host TNFRSF21; this interaction allows the modulation by the virus of JNK, p38 MAPK, STAT3, and Akt signaling pathways in a DR6-dependent manner. Interacts (via N-terminus) with host CIDEB (via N-terminus); this interaction seems to regulate the association of HCV particles with APOE. Interacts with host CHKA/Choline Kinase-alpha; CHKA bridges host PI4KA and NS5A and potentiates NS5A-stimulated PI4KA activity, which then facilitates the targeting of the ternary complex to the ER for viral replication. Interacts with host SPSB2 (via C-terminus); this interaction targets NS5A for ubiquitination and degradation. Interacts with host RAB18; this interaction may promote the association of NS5A and other replicase components with lipid droplets. Interacts (via region D2) with host PPIA/CYPA; the interaction stimulates RNA-binding ability of NS5A and is dependent on the peptidyl-prolyl cis-trans isomerase activity of PPIA/CYPA. Interacts with host TRIM14; this interaction induces the degradation of NS5A. In terms of assembly, homooligomer. Interacts with non-structural protein 5A. Interacts with host VAPB. Interacts with host PRK2/PKN2. Interacts with host HNRNPA1 and SEPT6; these interactions facilitate the viral replication. Part of the replication complex composed of NS2, NS3, NS4A, NS4B, NS5A and the RNA-directed RNA polymerase embedded in an ER-derived membranous web. Requires Zn(2+) as cofactor. Mg(2+) serves as cofactor. Post-translationally, specific enzymatic cleavages in vivo yield mature proteins. The structural proteins, core, E1, E2 and p7 are produced by proteolytic processing by host signal peptidases. The core protein is synthesized as a 23 kDa precursor which is retained in the ER membrane through the hydrophobic signal peptide. Cleavage by the signal peptidase releases the 21 kDa mature core protein. The cleavage of the core protein precursor occurs between aminoacids 176 and 188 but the exact cleavage site is not known. Some degraded forms of the core protein appear as well during the course of infection. The other proteins (p7, NS2, NS3, NS4A, NS4B, NS5A and NS5B) are cleaved by the viral proteases. Autoprocessing between NS2 and NS3 is mediated by the NS2 cysteine protease catalytic domain and regulated by the NS3 N-terminal domain. Phosphorylated by host PKC and PKA. In terms of processing, ubiquitinated; mediated by UBE3A and leading to core protein subsequent proteasomal degradation. Post-translationally, highly N-glycosylated. Palmitoylation is required for NS2/3 autoprocessing and E2 recruitment to membranes. In terms of processing, palmitoylated. This modification may play a role in its polymerization or in protein-protein interactions. Post-translationally, cleaved by host caspases which arec probably activated by the viral infection. Ubiquitinated. Ubiquitination, most probably at Lys-2350, mediated by host IFI27 and SKP2 leads to proteasomal degradation, restricting viral infection. In terms of processing, phosphorylated on serines in a basal form termed p56. p58 is a hyperphosphorylated form of p56. p56 and p58 coexist in the cell in roughly equivalent amounts. Hyperphosphorylation is dependent on the presence of NS4A. Host CSNK1A1/CKI-alpha, PI4KA or RPS6KB1 kinases may be responsible for NS5A phosphorylation. Phosphorylated NS5A is involved in viral replication. Post-translationally, tyrosine phosphorylation is essential for the interaction with host SRC. The N-terminus is phosphorylated by host PRK2/PKN2.

It is found in the host endoplasmic reticulum membrane. It localises to the host mitochondrion membrane. Its subcellular location is the virion. The protein resides in the host cytoplasm. The protein localises to the host nucleus. It is found in the host lipid droplet. It localises to the virion membrane. Its subcellular location is the host mitochondrion. The protein resides in the host cell membrane. The protein localises to the host perinuclear region. It carries out the reaction Hydrolysis of four peptide bonds in the viral precursor polyprotein, commonly with Asp or Glu in the P6 position, Cys or Thr in P1 and Ser or Ala in P1'.. It catalyses the reaction a ribonucleoside 5'-triphosphate + H2O = a ribonucleoside 5'-diphosphate + phosphate + H(+). The catalysed reaction is ATP + H2O = ADP + phosphate + H(+). The enzyme catalyses RNA(n) + a ribonucleoside 5'-triphosphate = RNA(n+1) + diphosphate. Inhibited by the antiviral drug hexamethylene amiloride. Inhibition by amantadine appears to be genotype-dependent. Also inhibited by long-alkyl-chain iminosugar derivatives. With respect to regulation, activity is up-regulated by PRK2/PKN2-mediated phosphorylation. Its function is as follows. Packages viral RNA to form a viral nucleocapsid, and promotes virion budding. Participates in the viral particle production as a result of its interaction with the non-structural protein 5A. Binds RNA and may function as a RNA chaperone to induce the RNA structural rearrangements taking place during virus replication. Modulates viral translation initiation by interacting with viral IRES and 40S ribosomal subunit. Affects various cell signaling pathways, host immunity and lipid metabolism. Prevents the establishment of cellular antiviral state by blocking the interferon-alpha/beta (IFN-alpha/beta) and IFN-gamma signaling pathways and by blocking the formation of phosphorylated STAT1 and promoting ubiquitin-mediated proteasome-dependent degradation of STAT1. Activates STAT3 leading to cellular transformation. Regulates the activity of cellular genes, including c-myc and c-fos. May repress the promoter of p53, and sequester CREB3 and SP110 isoform 3/Sp110b in the cytoplasm. Represses cell cycle negative regulating factor CDKN1A, thereby interrupting an important check point of normal cell cycle regulation. Targets transcription factors involved in the regulation of inflammatory responses and in the immune response: suppresses NF-kappa-B activation, and activates AP-1. Binds to dendritic cells (DCs) via C1QR1, resulting in down-regulation of T-lymphocytes proliferation. Alters lipid metabolism by interacting with hepatocellular proteins involved in lipid accumulation and storage. Induces up-regulation of FAS promoter activity, and thereby contributes to the increased triglyceride accumulation in hepatocytes (steatosis). In terms of biological role, forms a heterodimer with envelope glycoprotein E2, which mediates virus attachment to the host cell, virion internalization through clathrin-dependent endocytosis and fusion with host membrane. Fusion with the host cell is most likely mediated by both E1 and E2, through conformational rearrangements of the heterodimer required for fusion rather than a classical class II fusion mechanism. E1/E2 heterodimer binds host apolipoproteins such as APOB and APOE thereby forming a lipo-viro-particle (LVP). APOE associated to the LVP allows the initial virus attachment to cell surface receptors such as the heparan sulfate proteoglycans (HSPGs), syndecan-1 (SDC1), syndecan-1 (SDC2), the low-density lipoprotein receptor (LDLR) and scavenger receptor class B type I (SCARB1). The cholesterol transfer activity of SCARB1 allows E2 exposure and binding of E2 to SCARB1 and the tetraspanin CD81. E1/E2 heterodimer binding on CD81 activates the epithelial growth factor receptor (EGFR) signaling pathway. Diffusion of the complex E1-E2-EGFR-SCARB1-CD81 to the cell lateral membrane allows further interaction with Claudin 1 (CLDN1) and occludin (OCLN) to finally trigger HCV entry. Forms a heterodimer with envelope glycoprotein E1, which mediates virus attachment to the host cell, virion internalization through clathrin-dependent endocytosis and fusion with host membrane. Fusion with the host cell is most likely mediated by both E1 and E2, through conformational rearrangements of the heterodimer required for fusion rather than a classical class II fusion mechanism. The interaction between envelope glycoprotein E2 and host apolipoprotein E/APOE allows the proper assembly, maturation and infectivity of the viral particles. This interaction is probably promoted via the up-regulation of cellular autophagy by the virus. E1/E2 heterodimer binds host apolipoproteins such as APOB and APOE thereby forming a lipo-viro-particle (LVP). APOE associated to the LVP allows the initial virus attachment to cell surface receptors such as the heparan sulfate proteoglycans (HSPGs), syndecan-1 (SDC1), syndecan-1 (SDC2), the low-density lipoprotein receptor (LDLR) and scavenger receptor class B type I (SCARB1). The cholesterol transfer activity of SCARB1 allows E2 exposure and binding of E2 to SCARB1 and the tetraspanin CD81. E1/E2 heterodimer binding on CD81 activates the epithelial growth factor receptor (EGFR) signaling pathway. Diffusion of the complex E1-E2-EGFR-SCARB1-CD81 to the cell lateral membrane allows further interaction with Claudin 1 (CLDN1) and occludin (OCLN) to finally trigger HCV entry. Inhibits host EIF2AK2/PKR activation, preventing the establishment of an antiviral state. Viral ligand for CD209/DC-SIGN and CLEC4M/DC-SIGNR, which are respectively found on dendritic cells (DCs), and on liver sinusoidal endothelial cells and macrophage-like cells of lymph node sinuses. These interactions allow the capture of circulating HCV particles by these cells and subsequent facilitated transmission to permissive cells such as hepatocytes and lymphocyte subpopulations. The interaction between E2 and host amino acid transporter complex formed by SLC3A2 and SLC7A5/LAT1 may facilitate viral entry into host cell. Functionally, ion channel protein that acts as a viroporin and plays an essential role in the assembly, envelopment and secretion of viral particles. Regulates the host cell secretory pathway, which induces the intracellular retention of viral glycoproteins and favors assembly of viral particles. Creates a pore in acidic organelles and releases Ca(2+) and H(+) in the cytoplasm of infected cells, leading to a productive viral infection. High levels of cytoplasmic Ca(2+) may trigger membrane trafficking and transport of viral ER-associated proteins to viroplasms, sites of viral genome replication. This ionic imbalance induces the assembly of the inflammasome complex, which triggers the maturation of pro-IL-1beta into IL-1beta through the action of caspase-1. Targets also host mitochondria and induces mitochondrial depolarization. In addition of its role as a viroporin, acts as a lipid raft adhesion factor. Its function is as follows. Cysteine protease required for the proteolytic auto-cleavage between the non-structural proteins NS2 and NS3. The N-terminus of NS3 is required for the function of NS2 protease (active region NS2-3). Promotes the initiation of viral particle assembly by mediating the interaction between structural and non-structural proteins. In terms of biological role, displays three enzymatic activities: serine protease with a chymotrypsin-like fold, NTPase and RNA helicase. NS3 serine protease, in association with NS4A, is responsible for the cleavages of NS3-NS4A, NS4A-NS4B, NS4B-NS5A and NS5A-NS5B. The NS3/NS4A complex prevents phosphorylation of host IRF3, thus preventing the establishment of dsRNA induced antiviral state. The NS3/NS4A complex induces host amino acid transporter component SLC3A2, thus contributing to HCV propagation. NS3 RNA helicase binds to RNA and unwinds both dsDNA and dsRNA in the 3' to 5' direction, and likely resolves RNA complicated stable secondary structures in the template strand. Binds a single ATP and catalyzes the unzipping of a single base pair of dsRNA. Inhibits host antiviral proteins TBK1 and IRF3 thereby preventing the establishment of an antiviral state. Cleaves host MAVS/CARDIF thereby preventing the establishment of an antiviral state. Cleaves host TICAM1/TRIF, thereby disrupting TLR3 signaling and preventing the establishment of an antiviral state. Peptide cofactor which forms a non-covalent complex with the N-terminal of NS3 serine protease. The NS3/NS4A complex prevents phosphorylation of host IRF3, thus preventing the establishment of dsRNA induced antiviral state. The NS3/NS4A complex induces host amino acid transporter component SLC3A2, thus contributing to HCV propagation. Functionally, induces a specific membrane alteration that serves as a scaffold for the virus replication complex. This membrane alteration gives rise to the so-called ER-derived membranous web that contains the replication complex. NS4B self-interaction contributes to its function in membranous web formation. Promotes host TRIF protein degradation in a CASP8-dependent manner thereby inhibiting host TLR3-mediated interferon signaling. Disrupts the interaction between STING and TBK1 contributing to the inhibition of interferon signaling. Its function is as follows. Phosphorylated protein that is indispensable for viral replication and assembly. Both hypo- and hyperphosphorylated states are required for the viral life cycle. The hyperphosphorylated form of NS5A is an inhibitor of viral replication. Involved in RNA-binding and especially in binding to the viral genome. Zinc is essential for RNA-binding. Participates in the viral particle production as a result of its interaction with the viral mature core protein. Its interaction with host VAPB may target the viral replication complex to vesicles. Down-regulates viral IRES translation initiation. Mediates interferon resistance, presumably by interacting with and inhibiting host EIF2AK2/PKR. Prevents BIN1-induced apoptosis. Acts as a transcriptional activator of some host genes important for viral replication when localized in the nucleus. Via the interaction with host PACSIN2, modulates lipid droplet formation in order to promote virion assembly. Modulates TNFRSF21/DR6 signaling pathway for viral propagation. In terms of biological role, RNA-dependent RNA polymerase that performs primer-template recognition and RNA synthesis during viral replication. Initiates RNA transcription/replication at a flavin adenine dinucleotide (FAD), resulting in a 5'- FAD cap on viral RNAs. In this way, recognition of viral 5' RNA by host pattern recognition receptors can be bypassed, thereby evading activation of antiviral pathways. The chain is Genome polyprotein from Homo sapiens (Human).